Reading from the N-terminus, the 1135-residue chain is DNA-directed RNA polymerase I subunit RPA2 (1135 aa).

Residues 1-24 form a disordered region; it reads MDPGSRWRNLPSGPSLKHLTDPSY. Residue arginine 180 coordinates RNA. The tract at residues 194–208 is loop B; sequence IRPKWKTRGPGYTQY. The segment at 236–247 is loop A; the sequence is LNFIYRKELFFL. Position 367 (aspartate 367) interacts with RNA. Fork loop stretches follow at residues 439–453 and 474–489; these read LRSK…DSGL and RGAD…VRRL. A Mg(2+)-binding site is contributed by aspartate 755. Residue lysine 890 coordinates RNA. DNA contacts are provided by arginine 1020 and arginine 1036. Serine 1051 carries the phosphoserine modification. Residues cysteine 1070, cysteine 1073, cysteine 1098, and cysteine 1101 each coordinate Zn(2+). Residues 1070–1101 form a C4-type zinc finger; that stretch reads CVKCGSLLSPLLEKPPPSWSAMRNRKYNCTLC.

The protein belongs to the RNA polymerase beta chain family. Component of the RNA polymerase I (Pol I) complex consisting of 13 subunits: a ten-subunit catalytic core composed of POLR1A/RPA1, POLR1B/RPA2, POLR1C/RPAC1, POLR1D/RPAC2, POLR1H/RPA12, POLR2E/RPABC1, POLR2F/RPABC2, POLR2H/RPABC3, POLR2K/RPABC4 and POLR2L/RPABC5; a mobile stalk subunit POLR1F/RPA43 protruding from the core and additional subunits homologous to general transcription factors POLR1E/RPA49 and POLR1G/RPA34. Part of Pol I pre-initiation complex (PIC), in which Pol I core assembles with RRN3 and promoter-bound UTBF and SL1/TIF-IB complex. Mg(2+) serves as cofactor.

Its subcellular location is the nucleus. The protein localises to the nucleolus. It is found in the chromosome. The enzyme catalyses RNA(n) + a ribonucleoside 5'-triphosphate = RNA(n+1) + diphosphate. In terms of biological role, catalytic core component of RNA polymerase I (Pol I), a DNA-dependent RNA polymerase which synthesizes ribosomal RNA precursors using the four ribonucleoside triphosphates as substrates. Transcribes 47S pre-rRNAs from multicopy rRNA gene clusters, giving rise to 5.8S, 18S and 28S ribosomal RNAs. Pol I-mediated transcription cycle proceeds through transcription initiation, transcription elongation and transcription termination stages. During transcription initiation, Pol I pre-initiation complex (PIC) is recruited by the selectivity factor 1 (SL1/TIF-IB) complex bound to the core promoter that precedes an rDNA repeat unit. The PIC assembly bends the promoter favoring the formation of the transcription bubble and promoter escape. Once the polymerase has escaped from the promoter it enters the elongation phase during which RNA is actively polymerized, based on complementarity with the template DNA strand. Highly processive, assembles in structures referred to as 'Miller trees' where many elongating Pol I complexes queue and transcribe the same rDNA coding regions. At terminator sequences downstream of the rDNA gene, PTRF interacts with Pol I and halts Pol I transcription leading to the release of the RNA transcript and polymerase from the DNA. Forms Pol I active center together with the largest subunit POLR1A/RPA1. Appends one nucleotide at a time to the 3' end of the nascent RNA, with POLR1A/RPA1 contributing a Mg(2+)-coordinating DxDGD motif, and POLR1B/RPA2 participating in the coordination of a second Mg(2+) ion and providing lysine residues believed to facilitate Watson-Crick base pairing between the incoming nucleotide and the template base. Typically, Mg(2+) ions direct a 5' nucleoside triphosphate to form a phosphodiester bond with the 3' hydroxyl of the preceding nucleotide of the nascent RNA, with the elimination of pyrophosphate. Has proofreading activity: Pauses and backtracks to allow the cleavage of a missincorporated nucleotide via POLR1H/RPA12. High Pol I processivity is associated with decreased transcription fidelity. This is DNA-directed RNA polymerase I subunit RPA2 from Homo sapiens (Human).